Consider the following 435-residue polypeptide: 3-phosphoshikimate 1-carboxyvinyltransferase (435 aa).

Residues lysine 15, serine 16, and arginine 20 each contribute to the 3-phosphoshikimate site. Lysine 15 serves as a coordination point for phosphoenolpyruvate. Residues glycine 96 and arginine 124 each contribute to the phosphoenolpyruvate site. Positions 169, 171, 195, 318, and 345 each coordinate 3-phosphoshikimate. Phosphoenolpyruvate is bound at residue glutamine 171. Aspartate 318 (proton acceptor) is an active-site residue. Positions 349 and 393 each coordinate phosphoenolpyruvate.

Belongs to the EPSP synthase family. Monomer.

Its subcellular location is the cytoplasm. The enzyme catalyses 3-phosphoshikimate + phosphoenolpyruvate = 5-O-(1-carboxyvinyl)-3-phosphoshikimate + phosphate. Its pathway is metabolic intermediate biosynthesis; chorismate biosynthesis; chorismate from D-erythrose 4-phosphate and phosphoenolpyruvate: step 6/7. Catalyzes the transfer of the enolpyruvyl moiety of phosphoenolpyruvate (PEP) to the 5-hydroxyl of shikimate-3-phosphate (S3P) to produce enolpyruvyl shikimate-3-phosphate and inorganic phosphate. This chain is 3-phosphoshikimate 1-carboxyvinyltransferase, found in Chlorobium chlorochromatii (strain CaD3).